The primary structure comprises 214 residues: 2-phospho-L-lactate guanylyltransferase (214 aa).

The protein belongs to the CofC family. As to quaternary structure, homodimer.

It carries out the reaction (2S)-2-phospholactate + GTP + H(+) = (2S)-lactyl-2-diphospho-5'-guanosine + diphosphate. The protein operates within cofactor biosynthesis; coenzyme F420 biosynthesis. Guanylyltransferase that catalyzes the activation of (2S)-2-phospholactate (2-PL) as (2S)-lactyl-2-diphospho-5'-guanosine, via the condensation of 2-PL with GTP. It is involved in the biosynthesis of coenzyme F420, a hydride carrier cofactor. In Methanoregula boonei (strain DSM 21154 / JCM 14090 / 6A8), this protein is 2-phospho-L-lactate guanylyltransferase.